A 70-amino-acid polypeptide reads, in one-letter code: DNA-directed RNA polymerase subunit omega (70 aa).

It belongs to the RNA polymerase subunit omega family. In terms of assembly, the RNAP catalytic core consists of 2 alpha, 1 beta, 1 beta' and 1 omega subunit. When a sigma factor is associated with the core the holoenzyme is formed, which can initiate transcription.

The catalysed reaction is RNA(n) + a ribonucleoside 5'-triphosphate = RNA(n+1) + diphosphate. Functionally, promotes RNA polymerase assembly. Latches the N- and C-terminal regions of the beta' subunit thereby facilitating its interaction with the beta and alpha subunits. The sequence is that of DNA-directed RNA polymerase subunit omega from Shouchella clausii (strain KSM-K16) (Alkalihalobacillus clausii).